The sequence spans 1659 residues: eIF-2-alpha kinase GCN2 (1659 aa).

Positions 17-128 (NELEAIRSIY…SFTQEKLDEF (112 aa)) constitute an RWD domain. The disordered stretch occupies residues 149 to 170 (KEQLEKEEREKQQETIKKRSDE). Protein kinase domains follow at residues 256 to 527 (LVKP…MKFL) and 599 to 981 (FEEI…SGWL). Residues 605–613 (LGQGAFGQV) and lysine 628 each bind ATP. Disordered regions lie at residues 671-691 (NVFE…DFEE) and 727-768 (FENS…VPRR). Serine 761 is subject to Phosphoserine. The active-site Proton acceptor is the aspartate 835. Phosphothreonine; by autocatalysis occurs at positions 882 and 887. The segment at 999–1519 (NPSSPWQQQV…EFKRWDENSS (521 aa)) is histidyl-tRNA synthetase-like.

It belongs to the protein kinase superfamily. Ser/Thr protein kinase family. GCN2 subfamily. Homodimer; homodimerization is important for kinase activation by uncharged tRNAs. Interacts (via N-terminal RWD domain) with GCN1 (via N- and C-terminus); this interaction stimulates GCN2 kinase activity in a GCN20-dependent manner in response to amino acid starvation. Interacts (via N-terminus) with the GCN1-GCN20 complex on translating ribosomes in amino acid-starved cells; GCN1 may bind near the ribosomal A-site and promotes the transfer of uncharged tRNAs from the A-site to the tRNA-binding domain in GCN2 for its subsequent kinase activation, and hence allowing GCN4 translational activation and derepression of amino acid biosynthetic genes. Interacts (via C-terminus) with TIF11; this interaction is direct, occurs in amino acid-repleted cells, may be stabilized in a ribosome-dependent manner, reduces GCN2-mediated eIF-2-alpha phosphorylation but not GCN2 autophosphorylation and is lost in amino acid-starved cells and by uncharged tRNAs. Associates (via C-terminus) with ribosomes. It depends on Mg(2+) as a cofactor. In terms of processing, autophosphorylated, autophosphorylation on Thr-882 and Thr-887 increases kinase activity.

The protein localises to the cytoplasm. It catalyses the reaction L-seryl-[protein] + ATP = O-phospho-L-seryl-[protein] + ADP + H(+). The enzyme catalyses L-threonyl-[protein] + ATP = O-phospho-L-threonyl-[protein] + ADP + H(+). Its activity is regulated as follows. The integrated stress response (ISR) is activated in response to conditions that promote ribosome collisions: GCN1, which acts as a ribosome collision sensor, activates GCN2. The RQC pathway and the integrated stress response (ISR) antagonize each other: HEL2 prevents the activation of GCN2, while GCN2 suppresses RQC activation. Ribosome stalling-induced integrated stress response prefers ribosomes with empty A sites. The kinase activity is stimulated upon binding to uncharged tRNAs. Metabolic-stress sensing protein kinase that phosphorylates the alpha subunit of eukaryotic translation initiation factor 2 (eIF-2-alpha/SUI2) on 'Ser-52' in response to low amino acid, carbon, or purine availability. Required for adapatation to nutrient starvation by acting as a key component of the integrated stress response (ISR), by which cells alter their translational and transcriptional output in response to starvation. Converts phosphorylated eIF-2-alpha/SUI2 either to a competitive inhibitor of translation initiation factor eIF-2B, leading to a global protein synthesis repression, and thus to a reduced overall utilization of amino acids, or to a translational initiation activation of specific mRNAs, such as the transcriptional activator GCN4, and hence allowing GCN4-mediated reprogramming of transcription to alleviate nutrient depletion. Binds uncharged tRNAs. Binds to aminoacylated tRNA(Phe) less tightly than to deacylated tRNA(Phe). Binds to double-stranded RNA. The chain is eIF-2-alpha kinase GCN2 from Saccharomyces cerevisiae (strain ATCC 204508 / S288c) (Baker's yeast).